Here is a 481-residue protein sequence, read N- to C-terminus: MTDRADADRPATSPTGLRLYDTMTGAVRDFVPLRDGHVSIYLCGATVQGLPHIGHVRSGVAFDVLRRWLTAKGLDVAFIRNVTDIDDKILNKAADAGRPWWEWAATYERAFSAAYDALGVLPPSAEPRATGHITQMVELIERLIDRGHAYTGDGDVYFNVATLPDYGKLSGHRIDDVHQGEGVATGKRDQRDFTLWKGAKPGEPSWPTPWGRGRPGWHTECVAMCEAYLGAEFDIHAGGMDLVFPHHENEIAQAEAAGDGFARFWLHNGWVTMGGEKMSKSLGNVLSIPAVLQRVRAAELRYYLGSAHYRSMLEFSETALQDAVKAYAGVEDFLHRVRTRVGTVVPGDWTPKFAAALDDDLSVPIALAEVHAARAVGNRALDSGDHETAMTQARSIRAMMGILGCDPLDERWESRDETSAALAAIDVLVRWALDSRADARNRKDWATADQIRDRLKEAGIEVTDTADGPQWSLLDGDSKDV.

Position 43 (Cys43) interacts with Zn(2+). A 'HIGH' region motif is present at residues 45 to 55 (ATVQGLPHIGH). Residues Cys221, His246, and Glu250 each coordinate Zn(2+). The 'KMSKS' region motif lies at 277–281 (KMSKS). Lys280 serves as a coordination point for ATP.

The protein belongs to the class-I aminoacyl-tRNA synthetase family. Monomer. Requires Zn(2+) as cofactor.

The protein resides in the cytoplasm. It carries out the reaction tRNA(Cys) + L-cysteine + ATP = L-cysteinyl-tRNA(Cys) + AMP + diphosphate. In Mycobacterium sp. (strain KMS), this protein is Cysteine--tRNA ligase.